A 287-amino-acid polypeptide reads, in one-letter code: ADP-dependent (S)-NAD(P)H-hydrate dehydratase (287 aa).

Positions 7–283 (TTALVKKFIP…PEISTVMKPF (277 aa)) constitute a YjeF C-terminal domain. (6S)-NADPHX-binding residues include A42 and H159. AMP is bound by residues 196 to 200 (KGSTD) and G224. Residue D225 participates in (6S)-NADPHX binding.

The protein belongs to the NnrD/CARKD family. In terms of assembly, homotetramer. Mg(2+) is required as a cofactor.

It catalyses the reaction (6S)-NADHX + ADP = AMP + phosphate + NADH + H(+). The enzyme catalyses (6S)-NADPHX + ADP = AMP + phosphate + NADPH + H(+). Its function is as follows. Catalyzes the dehydration of the S-form of NAD(P)HX at the expense of ADP, which is converted to AMP. Together with NAD(P)HX epimerase, which catalyzes the epimerization of the S- and R-forms, the enzyme allows the repair of both epimers of NAD(P)HX, a damaged form of NAD(P)H that is a result of enzymatic or heat-dependent hydration. This chain is ADP-dependent (S)-NAD(P)H-hydrate dehydratase, found in Nitrosopumilus maritimus (strain SCM1).